Consider the following 375-residue polypeptide: Phosphoglucan phosphatase DSP4, amyloplastic (375 aa).

The N-terminal 42 residues, Met1 to Arg42, are a transit peptide targeting the amyloplast. The tract at residues Ile49–Tyr71 is disordered. Positions Gly51 to Ala61 are enriched in polar residues. The Tyrosine-protein phosphatase domain maps to Asn92–Lys249. The active-site Phosphocysteine intermediate is the Cys193. Residue Thr194 to Arg199 coordinates substrate. The interval Leu254–Val330 is polysaccharide binding.

As to expression, expressed in phloem parenchyma of 16-24 week old seedlings and 2 year old trees (at protein level). Expressed in leaves of 16-24 week old seedlings and 2 year old trees.

The protein localises to the plastid. It is found in the amyloplast. The protein resides in the nucleus. Its function is as follows. Starch granule-associated phosphoglucan phosphatase involved in the control of starch accumulation. Acts as a major regulator of the initial steps of starch degradation at the granule surface. Functions during the day by dephosphorylating the night-accumulated phospho-oligosaccharides. Can release phosphate from both the C6 and the C3 positions. In Castanea sativa (Sweet chestnut), this protein is Phosphoglucan phosphatase DSP4, amyloplastic.